Consider the following 1017-residue polypeptide: Nonsense-mediated mRNA decay factor SMG5 (1017 aa).

S2 is subject to N-acetylserine. Phosphoserine is present on residues S2 and S423. Disordered regions lie at residues 406 to 562 (GENP…PSEA) and 597 to 640 (TEPN…CRNE). The span at 448–467 (KSRKHSRLSCLRRRRRHHPP) shows a compositional bias: basic residues. Over residues 486–496 (DSAQASDGSDS) the composition is skewed to low complexity. A compositionally biased stretch (acidic residues) spans 620 to 629 (ASEDGSESEG). A coiled-coil region spans residues 798–842 (AQSEQESLLQQAQAQFRMAEEEARRNRLMRDMAQLRLQLEVSQLE). In terms of domain architecture, PINc spans 873 to 996 (RQLATSGRFI…GPMQAALQAA (124 aa)).

As to quaternary structure, interacts with TERT, PPP2CA and SMG1. Part of a complex that contains SMG1, SMG5, SMG7, PPP2CA, a short isoform of UPF3A (isoform UPF3AS, but not isoform UPF3AL) and phosphorylated UPF1. Not detected in complexes that contain unphosphorylated UPF1.

It is found in the cytoplasm. Its subcellular location is the nucleus. Functionally, plays a role in nonsense-mediated mRNA decay. Does not have RNase activity by itself. Promotes dephosphorylation of UPF1. Together with SMG7 is thought to provide a link to the mRNA degradation machinery involving exonucleolytic pathways, and to serve as an adapter for UPF1 to protein phosphatase 2A (PP2A), thereby triggering UPF1 dephosphorylation. Necessary for TERT activity. The chain is Nonsense-mediated mRNA decay factor SMG5 from Mus musculus (Mouse).